A 410-amino-acid polypeptide reads, in one-letter code: Argininosuccinate synthase (410 aa).

10–18 contacts ATP; sequence AYSGGLDTS. Residues Tyr-88 and Ser-93 each coordinate L-citrulline. An ATP-binding site is contributed by Gly-118. Positions 120, 124, and 125 each coordinate L-aspartate. Asn-124 is an L-citrulline binding site. Arg-128, Ser-177, Ser-186, Glu-262, and Tyr-274 together coordinate L-citrulline.

This sequence belongs to the argininosuccinate synthase family. Type 1 subfamily. In terms of assembly, homotetramer.

Its subcellular location is the cytoplasm. It carries out the reaction L-citrulline + L-aspartate + ATP = 2-(N(omega)-L-arginino)succinate + AMP + diphosphate + H(+). It functions in the pathway amino-acid biosynthesis; L-arginine biosynthesis; L-arginine from L-ornithine and carbamoyl phosphate: step 2/3. The protein is Argininosuccinate synthase of Thermoanaerobacter sp. (strain X514).